Here is a 21-residue protein sequence, read N- to C-terminus: NRTFKTNTKCHVKNQCNFLCQ.

As to expression, expressed by the venom gland.

It localises to the secreted. The protein is Venom peptide Ocy4 of Opisthacanthus cayaporum (South American scorpion).